An 81-amino-acid chain; its full sequence is Mipartoxin-1 (81 aa).

A signal peptide spans 1 to 21 (MKTLLLTLVVVTIVCLDLGNS). Intrachain disulfides connect Cys24–Cys42, Cys35–Cys61, Cys65–Cys73, and Cys74–Cys79.

It belongs to the three-finger toxin family. Short-chain subfamily. Contains 4 disulfide bonds. As to expression, expressed by the venom gland.

It localises to the secreted. Its function is as follows. Snake venom neurotoxin that blocks neuromuscular transmission on both avian and mouse nerve-muscle preparations, presenting a postsynaptic action through the nicotinic acetylcholine receptor (nAChR). Reversibly inhibits twitches in mouse phrenic nerve diaphragm and irreversibly in chick biventer cervicis muscle. Has no cytotoxic activity towards C2C12 cells up to 180 ug/ml. This chain is Mipartoxin-1, found in Micrurus mipartitus (Red-tailed coral snake).